Here is a 328-residue protein sequence, read N- to C-terminus: Formimidoylglutamase (328 aa).

Residues His-133, Asp-159, His-161, Asp-163, Asp-253, and Asp-255 each coordinate Mn(2+).

Belongs to the arginase family. Mn(2+) serves as cofactor.

The catalysed reaction is N-formimidoyl-L-glutamate + H2O = formamide + L-glutamate. Its pathway is amino-acid degradation; L-histidine degradation into L-glutamate; L-glutamate from N-formimidoyl-L-glutamate (hydrolase route): step 1/1. Functionally, catalyzes the conversion of N-formimidoyl-L-glutamate to L-glutamate and formamide. This Streptococcus pyogenes serotype M18 (strain MGAS8232) protein is Formimidoylglutamase.